We begin with the raw amino-acid sequence, 297 residues long: uncharacterized protein (297 aa).

The next 5 helical transmembrane spans lie at 114-136 (YNRW…LSSG), 150-170 (LLYD…VFNV), 197-217 (MPIV…GVHL), 227-247 (AFTV…KAMI), and 269-289 (FINT…PGLL).

Belongs to the ThrE exporter (TC 2.A.79) family.

The protein resides in the cell inner membrane. This is an uncharacterized protein from Haemophilus influenzae (strain ATCC 51907 / DSM 11121 / KW20 / Rd).